Consider the following 606-residue polypeptide: Aspartate--tRNA(Asp/Asn) ligase (606 aa).

An L-aspartate-binding site is contributed by Glu-177. The tract at residues 201–204 is aspartate; the sequence is QLFK. Arg-223 is an L-aspartate binding site. ATP contacts are provided by residues 223–225 and Gln-232; that span reads RDE. His-461 contributes to the L-aspartate binding site. Residue Glu-499 coordinates ATP. L-aspartate is bound at residue Arg-506. 551-554 provides a ligand contact to ATP; it reads GMDR.

This sequence belongs to the class-II aminoacyl-tRNA synthetase family. Type 1 subfamily. Homodimer.

The protein resides in the cytoplasm. The enzyme catalyses tRNA(Asx) + L-aspartate + ATP = L-aspartyl-tRNA(Asx) + AMP + diphosphate. In terms of biological role, aspartyl-tRNA synthetase with relaxed tRNA specificity since it is able to aspartylate not only its cognate tRNA(Asp) but also tRNA(Asn). Reaction proceeds in two steps: L-aspartate is first activated by ATP to form Asp-AMP and then transferred to the acceptor end of tRNA(Asp/Asn). The sequence is that of Aspartate--tRNA(Asp/Asn) ligase from Prochlorococcus marinus (strain MIT 9313).